The following is a 345-amino-acid chain: MVLFKAKFSFQRRVKLAQTLWLLSWLSVLVGCLTFGMGIFLKVQLWIHNEVMDNTTAHAVPNTVITAGLVGILLGYFAGKISQASMDLTKYQRWKSFMMPFFFLAILSCIVCLAALVLSVALRGTLEESLKIGLRNAIRFYKDTDTPGRCYQKRSMDKLEMDFQCCGNNHPKDWFEVQWISNRYLDFSSKEVKDRIKSSVDGRYLMDSVPFTCCNPSSPRPCIQIEITNNSAHYSYNFQGDDVNIWVRGCREALLGYYTGIMATNGAAVTLSFLLQASVLVSLRYVQTSMDKIRDPDDVEADTEGFLLEKGVMETVNSSLEKIKDLFKSNQVETAEGGGEGAAGS.

At 1–24 the chain is on the cytoplasmic side; sequence MVLFKAKFSFQRRVKLAQTLWLLS. Residues 25 to 43 form a helical membrane-spanning segment; it reads WLSVLVGCLTFGMGIFLKV. Residues 44–61 lie on the Lumenal side of the membrane; sequence QLWIHNEVMDNTTAHAVP. Residue Asn-54 is glycosylated (N-linked (GlcNAc...) asparagine). The chain crosses the membrane as a helical span at residues 62 to 80; it reads NTVITAGLVGILLGYFAGK. Residues 81–99 lie on the Cytoplasmic side of the membrane; it reads ISQASMDLTKYQRWKSFMM. The helical transmembrane segment at 100–123 threads the bilayer; the sequence is PFFFLAILSCIVCLAALVLSVALR. The Lumenal portion of the chain corresponds to 124–264; sequence GTLEESLKIG…LGYYTGIMAT (141 aa). Asn-229 carries an N-linked (GlcNAc...) asparagine glycan. Residues 265–290 traverse the membrane as a helical segment; sequence NGAAVTLSFLLQASVLVSLRYVQTSM. The Cytoplasmic segment spans residues 291-345; it reads DKIRDPDDVEADTEGFLLEKGVMETVNSSLEKIKDLFKSNQVETAEGGGEGAAGS.

This sequence belongs to the PRPH2/ROM1 family. In terms of assembly, homodimer; disulfide-linked. As to expression, rod specific.

The protein localises to the membrane. In Xenopus laevis (African clawed frog), this protein is RDS/peripherin-like protein xRDS36 (rds36).